A 445-amino-acid chain; its full sequence is Phosphoglucosamine mutase (445 aa).

Ser103 acts as the Phosphoserine intermediate in catalysis. Ser103, Asp240, Asp242, and Asp244 together coordinate Mg(2+). Phosphoserine is present on Ser103.

The protein belongs to the phosphohexose mutase family. Mg(2+) serves as cofactor. In terms of processing, activated by phosphorylation.

The enzyme catalyses alpha-D-glucosamine 1-phosphate = D-glucosamine 6-phosphate. Its function is as follows. Catalyzes the conversion of glucosamine-6-phosphate to glucosamine-1-phosphate. In Cellvibrio japonicus (strain Ueda107) (Pseudomonas fluorescens subsp. cellulosa), this protein is Phosphoglucosamine mutase.